The sequence spans 466 residues: Asparagine--tRNA ligase (466 aa).

The protein belongs to the class-II aminoacyl-tRNA synthetase family. Homodimer.

The protein resides in the cytoplasm. It carries out the reaction tRNA(Asn) + L-asparagine + ATP = L-asparaginyl-tRNA(Asn) + AMP + diphosphate + H(+). The protein is Asparagine--tRNA ligase of Buchnera aphidicola subsp. Schizaphis graminum (strain Sg).